Here is a 206-residue protein sequence, read N- to C-terminus: Imidazole glycerol phosphate synthase subunit hisH (206 aa).

Residues 2 to 206 enclose the Glutamine amidotransferase type-1 domain; the sequence is KVGLVDYSMG…REVMKKAASL (205 aa). The active-site Nucleophile is the Cys-80. Catalysis depends on residues His-184 and Glu-186.

Heterodimer of hisH and hisF.

Its subcellular location is the plastid. It is found in the chloroplast. The catalysed reaction is 5-[(5-phospho-1-deoxy-D-ribulos-1-ylimino)methylamino]-1-(5-phospho-beta-D-ribosyl)imidazole-4-carboxamide + L-glutamine = D-erythro-1-(imidazol-4-yl)glycerol 3-phosphate + 5-amino-1-(5-phospho-beta-D-ribosyl)imidazole-4-carboxamide + L-glutamate + H(+). It catalyses the reaction L-glutamine + H2O = L-glutamate + NH4(+). It participates in amino-acid biosynthesis; L-histidine biosynthesis; L-histidine from 5-phospho-alpha-D-ribose 1-diphosphate: step 5/9. Its function is as follows. IGPS catalyzes the conversion of PRFAR and glutamine to IGP, AICAR and glutamate. The HisH subunit catalyzes the hydrolysis of glutamine to glutamate and ammonia as part of the synthesis of IGP and AICAR. The resulting ammonia molecule is channeled to the active site of HisF. This is Imidazole glycerol phosphate synthase subunit hisH from Cyanidioschyzon merolae (strain NIES-3377 / 10D) (Unicellular red alga).